The sequence spans 96 residues: RNA-binding protein Hfq (96 aa).

In terms of domain architecture, Sm spans 9–68 (DPYLNALRRERIPVSIYLVNGIKLQGQIESFDQFVILLKNTVNQMVYKHAISTVVPARSV). The tract at residues 67–96 (SVSHHNNSNNSNQQNYQQEQQTDSNVEKAE) is disordered. A compositionally biased stretch (low complexity) spans 72 to 87 (NNSNNSNQQNYQQEQQ).

This sequence belongs to the Hfq family. As to quaternary structure, homohexamer.

In terms of biological role, RNA chaperone that binds small regulatory RNA (sRNAs) and mRNAs to facilitate mRNA translational regulation in response to envelope stress, environmental stress and changes in metabolite concentrations. Also binds with high specificity to tRNAs. This is RNA-binding protein Hfq from Pasteurella multocida (strain Pm70).